The following is a 248-amino-acid chain: tRNA (guanine-N(1)-)-methyltransferase (248 aa).

S-adenosyl-L-methionine-binding positions include Gly113 and 133–138 (IGDYVL).

The protein belongs to the RNA methyltransferase TrmD family. Homodimer.

It is found in the cytoplasm. The enzyme catalyses guanosine(37) in tRNA + S-adenosyl-L-methionine = N(1)-methylguanosine(37) in tRNA + S-adenosyl-L-homocysteine + H(+). Specifically methylates guanosine-37 in various tRNAs. The sequence is that of tRNA (guanine-N(1)-)-methyltransferase from Shewanella loihica (strain ATCC BAA-1088 / PV-4).